Consider the following 329-residue polypeptide: Aspartate--ammonia ligase (329 aa).

The protein belongs to the class-II aminoacyl-tRNA synthetase family. AsnA subfamily.

It localises to the cytoplasm. The enzyme catalyses L-aspartate + NH4(+) + ATP = L-asparagine + AMP + diphosphate + H(+). It functions in the pathway amino-acid biosynthesis; L-asparagine biosynthesis; L-asparagine from L-aspartate (ammonia route): step 1/1. The sequence is that of Aspartate--ammonia ligase from Ureaplasma parvum serovar 3 (strain ATCC 27815 / 27 / NCTC 11736).